The sequence spans 351 residues: Calcium homeostasis modulator 1 (351 aa).

The Cytoplasmic portion of the chain corresponds to 1–20 (MDKFRMMFQFLQSNQESFMN). The interval 9 to 36 (QFLQSNQESFMNGICGIMALASAQMYSS) is central pore. The chain crosses the membrane as a helical span at residues 21–36 (GICGIMALASAQMYSS). Residues 37–48 (FEFSCPCMPEYN) lie on the Extracellular side of the membrane. 2 disulfides stabilise this stretch: C41/C126 and C43/C160. The chain crosses the membrane as a helical span at residues 49 to 71 (YTYGIGLLIIPPIWFFLLGFVLN). The phospholipid-binding stretch occupies residues 62 to 69 (WFFLLGFV). Over 72–98 (NNVSVLAEEWKRPTGRRTKDPSVLRYM) the chain is Cytoplasmic. Residues 99 to 124 (LCSITQRSLIAPAVWVSVTLMDGKSF) form a helical membrane-spanning segment. C100 is lipidated: S-palmitoyl cysteine. The segment at 104–116 (QRSLIAPAVWVSV) is phospholipid-binding. At 125–177 (LCAFSINLDIEKFGNASLVIGMTETEKLKFLARIPCKDLFEDNEVRVAATRYI) the chain is on the extracellular side. The N-linked (GlcNAc...) asparagine glycan is linked to N139. The chain crosses the membrane as a helical span at residues 178–203 (KCISQACGWMFLLMMTFTAFLIRAIR). A phospholipid-binding region spans residues 189–199 (LLMMTFTAFLI). The Cytoplasmic segment spans residues 204–351 (PCFTQAAFLK…KEWAVYYSKV (148 aa)). C205 is lipidated: S-palmitoyl cysteine. The segment at 259–281 (HRHQSKDTSDAEEEEKQRSDEDK) is disordered. Residues 263 to 281 (SKDTSDAEEEEKQRSDEDK) show a composition bias toward basic and acidic residues.

Belongs to the CALHM family. As to quaternary structure, oligomerizes to form hexamers and octamers. Does not form gap junctions. Associates with CALHM3 as a pore-forming subunit in a hetero-hexameric channel complex. In terms of processing, N-glycosylated. Palmitoylated.

The protein resides in the cell membrane. It localises to the endoplasmic reticulum membrane. It is found in the basolateral cell membrane. It catalyses the reaction ATP(in) = ATP(out). The catalysed reaction is Ca(2+)(in) = Ca(2+)(out). The enzyme catalyses Mg(2+)(in) = Mg(2+)(out). It carries out the reaction Na(+)(in) = Na(+)(out). It catalyses the reaction K(+)(in) = K(+)(out). The catalysed reaction is Li(+)(in) = Li(+)(out). The enzyme catalyses Rb(+)(in) = Rb(+)(out). It carries out the reaction Cs(+)(in) = Cs(+)(out). It catalyses the reaction chloride(in) = chloride(out). With respect to regulation, activated in response to membrane depolarization and low extracellular Ca(2+) concentration. Inhibited by ruthenium red. Pore-forming subunit of a voltage-gated ion channel. Has poor ion selectivity and forms a wide pore that mediates permeation of small ions including Ca(2+), Na(+), K(+) and Cl(-), as well as larger ions such as ATP(4-). This Oryzias latipes (Japanese rice fish) protein is Calcium homeostasis modulator 1.